A 64-amino-acid polypeptide reads, in one-letter code: Large ribosomal subunit protein bL35 (64 aa).

Residues 1–64 (MPKNKTNSGA…RKSIKKLLGK (64 aa)) are disordered.

The protein belongs to the bacterial ribosomal protein bL35 family.

The polypeptide is Large ribosomal subunit protein bL35 (Beutenbergia cavernae (strain ATCC BAA-8 / DSM 12333 / CCUG 43141 / JCM 11478 / NBRC 16432 / NCIMB 13614 / HKI 0122)).